A 427-amino-acid chain; its full sequence is L-glutamine:2-deoxy-scyllo-inosose aminotransferase (427 aa).

The segment at 1–20 (MPLQSSRLAVDNGTPVRGKP) is disordered. Lysine 205 bears the N6-(pyridoxal phosphate)lysine mark.

This sequence belongs to the DegT/DnrJ/EryC1 family. L-glutamine:2-deoxy-scyllo-inosose/scyllo-inosose aminotransferase subfamily. The cofactor is pyridoxal 5'-phosphate.

The catalysed reaction is 2-deoxy-L-scyllo-inosose + L-glutamine = 2-deoxy-scyllo-inosamine + 2-oxoglutaramate. It catalyses the reaction 3-amino-2,3-dideoxy-scyllo-inosose + L-glutamine = 2-deoxystreptamine + 2-oxoglutaramate. It functions in the pathway metabolic intermediate biosynthesis; 2-deoxystreptamine biosynthesis; 2-deoxystreptamine from D-glucose 6-phosphate: step 2/4. The protein operates within antibiotic biosynthesis; kanamycin biosynthesis. Its function is as follows. Catalyzes the PLP-dependent transamination of 2-deoxy-scyllo-inosose (2-DOI) to form 2-deoxy-scyllo-inosamine (2-DOIA) using L-glutamine as the amino donor. Also catalyzes the transamination of 3-amino-2,3-dideoxy-scyllo-inosose (keto-2-DOIA) into 2-deoxystreptamine (2-DOS). The polypeptide is L-glutamine:2-deoxy-scyllo-inosose aminotransferase (kanB) (Streptomyces kanamyceticus).